Consider the following 106-residue polypeptide: uncharacterized protein (106 aa).

Positions 28–68 are disordered; that stretch reads SSANEPKKLPNKKLVSTKSHTQVNREKSKNKDTYEDYSDSN. The span at 50–61 shows a compositional bias: basic and acidic residues; it reads VNREKSKNKDTY.

This is an uncharacterized protein from Acanthamoeba polyphaga (Amoeba).